The chain runs to 257 residues: Phosphonates import ATP-binding protein PhnC 1 (257 aa).

The ABC transporter domain occupies 2-246 (LKITNLTKRY…EMDTIYAGVP (245 aa)). 35–42 (GSSGAGKS) is a binding site for ATP.

Belongs to the ABC transporter superfamily. Phosphonates importer (TC 3.A.1.9.1) family. As to quaternary structure, the complex is composed of two ATP-binding proteins (PhnC), two transmembrane proteins (PhnE) and a solute-binding protein (PhnD).

It is found in the cell inner membrane. It carries out the reaction phosphonate(out) + ATP + H2O = phosphonate(in) + ADP + phosphate + H(+). In terms of biological role, part of the ABC transporter complex PhnCDE involved in phosphonates import. Responsible for energy coupling to the transport system. In Ruegeria sp. (strain TM1040) (Silicibacter sp.), this protein is Phosphonates import ATP-binding protein PhnC 1.